Reading from the N-terminus, the 535-residue chain is PAC-1 interacting and coiled-coil domain-containing protein 1 (535 aa).

Residues 1 to 67 (MIITTPRRAN…KQTPPRSPVI (67 aa)) form a disordered region. A compositionally biased stretch (low complexity) spans 36–57 (SSTTPSSIGSSSSSSSSYASST). 2 coiled-coil regions span residues 109–172 (KLQY…RDLS) and 198–242 (SLMK…RQSL). Disordered regions lie at residues 254–277 (NESE…NDEE) and 503–535 (TCRP…HTHN). Residues 503–525 (TCRPTTTLISSTQPAQRSVSVEK) are compositionally biased toward polar residues. Over residues 526-535 (NNNNNVHTHN) the composition is skewed to low complexity.

Belongs to the CCDC85 family. In terms of assembly, interacts with pac-1 and jac-1.

It localises to the cell junction. It is found in the adherens junction. Functionally, linker protein which helps to recruit the Rho GTPase-activating protein, pac-1, to adherens junctions. The polypeptide is PAC-1 interacting and coiled-coil domain-containing protein 1 (Caenorhabditis elegans).